Here is a 195-residue protein sequence, read N- to C-terminus: UPF0157 protein BH1888 (195 aa).

The segment covering 1–12 (MPPMKDSSNSTP) has biased composition (polar residues). The tract at residues 1–21 (MPPMKDSSNSTPRTDEELQEV) is disordered.

Belongs to the UPF0157 (GrpB) family.

The sequence is that of UPF0157 protein BH1888 from Halalkalibacterium halodurans (strain ATCC BAA-125 / DSM 18197 / FERM 7344 / JCM 9153 / C-125) (Bacillus halodurans).